The chain runs to 1188 residues: Probable RNA helicase armi (1188 aa).

723 to 730 (GPPGSGKT) is a binding site for ATP. Positions 862 to 865 (DEAG) match the DEAG box motif.

It belongs to the DNA2/NAM7 helicase family. SDE3 subfamily. As to quaternary structure, forms a complex with piwi and fs(1)Yb; this interaction is required for proper piRNA loading and nuclear localization of piwi. The interaction of piwi and fs(1)Yb is likely to occur via armi. In terms of tissue distribution, abundant in oocytes and syncytial blastoderm. Expressed at low level throughout development, including somatic tissues. First apparent early in oogenesis, in the cytoplasm of stem cells and mitotically dividing cystoblasts. In regions 2a and 2b of the germarium, it is most concentrated in the center of the germline cysts, where the pro-oocyte is located. In stage 1 and early stage 2 egg chambers, it accumulates at the anterior of the oocyte, near the ring canals. It also extends through the ring canals forming a branched structure that links the early oocyte with adjacent nurse cells. In stage 3 cysts, it accumulates at the posterior cortex and localizes to extensions that pass through the oocyte into the nurse cells. Through stages 4 to 7, it continues to be somewhat enriched at the posterior cortex of the oocyte, but at significantly lower level. In stage 9 to 10 egg chambers, it is found throughout the cytoplasm of the oocyte and nurse cells, with slight enrichment at the oocyte cortex.

Its subcellular location is the cytoplasm. The catalysed reaction is ATP + H2O = ADP + phosphate + H(+). Functionally, probable RNA helicase required for axial polarization of the oocyte during early and mid oogenesis. Plays a central role in RNA interference (RNAi) process, a process that mediates mRNA destruction of translational repression. Required for the assembly of the RISC complex, a complex required for target RNA destruction or repression. May be required in the RISC assembly to unwind miRNAs, in the production of single-stranded miRNA from the double-stranded miRNA, a key step in RISC formation. Required both for the translational control of oskar (osk) mRNA and cytoskeletal polarization in the oocyte. Required for somatic primary piRNA biogenesis. Involved in repression of long interspersed nuclear elements (LINEs) including HeT-A, I-element and TART LINEs. In Drosophila melanogaster (Fruit fly), this protein is Probable RNA helicase armi.